A 214-amino-acid chain; its full sequence is Probable septum site-determining protein MinC (214 aa).

Belongs to the MinC family. As to quaternary structure, interacts with MinD and FtsZ.

Cell division inhibitor that blocks the formation of polar Z ring septums. Rapidly oscillates between the poles of the cell to destabilize FtsZ filaments that have formed before they mature into polar Z rings. Prevents FtsZ polymerization. In Caldanaerobacter subterraneus subsp. tengcongensis (strain DSM 15242 / JCM 11007 / NBRC 100824 / MB4) (Thermoanaerobacter tengcongensis), this protein is Probable septum site-determining protein MinC.